Consider the following 456-residue polypeptide: ATP synthase subunit beta 1 (456 aa).

152 to 159 (GGAGVGKS) is an ATP binding site.

This sequence belongs to the ATPase alpha/beta chains family. In terms of assembly, F-type ATPases have 2 components, CF(1) - the catalytic core - and CF(0) - the membrane proton channel. CF(1) has five subunits: alpha(3), beta(3), gamma(1), delta(1), epsilon(1). CF(0) has three main subunits: a(1), b(2) and c(9-12). The alpha and beta chains form an alternating ring which encloses part of the gamma chain. CF(1) is attached to CF(0) by a central stalk formed by the gamma and epsilon chains, while a peripheral stalk is formed by the delta and b chains.

It is found in the cell membrane. The enzyme catalyses ATP + H2O + 4 H(+)(in) = ADP + phosphate + 5 H(+)(out). Produces ATP from ADP in the presence of a proton gradient across the membrane. The catalytic sites are hosted primarily by the beta subunits. This chain is ATP synthase subunit beta 1, found in Listeria innocua serovar 6a (strain ATCC BAA-680 / CLIP 11262).